Consider the following 862-residue polypeptide: Protein argonaute-2 (862 aa).

Positions 232 to 351 constitute a PAZ domain; sequence PVIEFMCEVL…LPLEVCNIVA (120 aa). Interaction with guide RNA stretches follow at residues 314 to 319 and 527 to 569; these read YFKDRH and GKTP…LCLK. Residues 520 to 821 enclose the Piwi domain; the sequence is LVVVILPGKT…VAFRARYHLV (302 aa). An interaction with GW182 family members region spans residues 590-593; the sequence is FQQP. D600 contributes to the a divalent metal cation binding site. The segment at 653–663 is interaction with GW182 family members; it reads LIQFYKSTRFK. Residue D672 participates in a divalent metal cation binding. Interaction with guide RNA regions lie at residues 712-713, 756-764, and 793-815; these read KR, HAGIQGTSR, and YVRCTRSVSIPAPAYYAHLVAFR. H810 contributes to the a divalent metal cation binding site. The segment at 825 to 847 is disordered; that stretch reads HDSAEGSHTSGQSNGRDQQALAK. The span at 830-841 shows a compositional bias: polar residues; the sequence is GSHTSGQSNGRD.

The protein belongs to the argonaute family. Ago subfamily. As to quaternary structure, component of the RISC loading complex (RLC), or micro-RNA (miRNA) loading complex (miRLC), which is composed of dicer1, ago2 and tarbp2. Note that the trimeric RLC/miRLC is also referred to as RISC. Mg(2+) is required as a cofactor. Requires Mn(2+) as cofactor.

The protein localises to the cytoplasm. Its subcellular location is the P-body. The catalysed reaction is Endonucleolytic cleavage to 5'-phosphomonoester.. Functionally, required for RNA-mediated gene silencing (RNAi) by the RNA-induced silencing complex (RISC). The 'minimal RISC' appears to include ago2 bound to a short guide RNA such as a microRNA (miRNA) or short interfering RNA (siRNA). These guide RNAs direct RISC to complementary mRNAs that are targets for RISC-mediated gene silencing. The precise mechanism of gene silencing depends on the degree of complementarity between the miRNA or siRNA and its target. Binding of RISC to a perfectly complementary mRNA generally results in silencing due to endonucleolytic cleavage of the mRNA specifically by ago2. Binding of RISC to a partially complementary mRNA results in silencing through inhibition of translation, and this is independent of endonuclease activity. The inhibition of translational initiation leads to the accumulation of the affected mRNA in cytoplasmic processing bodies (P-bodies), where mRNA degradation may subsequently occur. The chain is Protein argonaute-2 (ago2) from Xenopus laevis (African clawed frog).